A 208-amino-acid chain; its full sequence is ATP synthase subunit beta, chloroplastic (208 aa).

This sequence belongs to the ATPase alpha/beta chains family. As to quaternary structure, F-type ATPases have 2 components, CF(1) - the catalytic core - and CF(0) - the membrane proton channel. CF(1) has five subunits: alpha(3), beta(3), gamma(1), delta(1), epsilon(1). CF(0) has four main subunits: a(1), b(1), b'(1) and c(9-12).

The protein localises to the plastid. Its subcellular location is the chloroplast thylakoid membrane. The enzyme catalyses ATP + H2O + 4 H(+)(in) = ADP + phosphate + 5 H(+)(out). In terms of biological role, produces ATP from ADP in the presence of a proton gradient across the membrane. The catalytic sites are hosted primarily by the beta subunits. This is ATP synthase subunit beta, chloroplastic (atpB) from Hypolepis hostilis (Fern).